We begin with the raw amino-acid sequence, 652 residues long: Ethylmalonyl-CoA mutase (652 aa).

The region spanning 519–647 (PLKFVVGKPG…MDIVGLVDRT (129 aa)) is the B12-binding domain. His-532 serves as a coordination point for adenosylcob(III)alamin.

It belongs to the methylmalonyl-CoA mutase family. Homodimer. The cofactor is adenosylcob(III)alamin.

It carries out the reaction (2R)-ethylmalonyl-CoA = (2S)-methylsuccinyl-CoA. In terms of biological role, radical enzyme that catalyzes the transformation of (2R)-ethylmalonyl-CoA to (2S)-methylsuccinyl-CoA. Is involved in the ethylmalonyl-CoA pathway for acetyl-CoA assimilation required for R.sphaeroides growth on acetate as sole carbon source. Is highly specific for its substrate, ethylmalonyl-CoA, and accepts methylmalonyl-CoA only at 0.2% relative activity. This Cereibacter sphaeroides (strain ATCC 17023 / DSM 158 / JCM 6121 / CCUG 31486 / LMG 2827 / NBRC 12203 / NCIMB 8253 / ATH 2.4.1.) (Rhodobacter sphaeroides) protein is Ethylmalonyl-CoA mutase.